A 113-amino-acid chain; its full sequence is Beta-microseminoprotein A1 (113 aa).

A signal peptide spans 1-20 (MNVLLGGLVIFATFVTLCNG). 5 disulfides stabilise this stretch: cysteine 22/cysteine 70, cysteine 38/cysteine 62, cysteine 57/cysteine 93, cysteine 60/cysteine 69, and cysteine 84/cysteine 107.

Belongs to the beta-microseminoprotein family.

The protein localises to the secreted. In Saguinus oedipus (Cotton-top tamarin), this protein is Beta-microseminoprotein A1 (MSPA).